The primary structure comprises 652 residues: Zinc finger protein 432 (652 aa).

A KRAB domain is found at 8 to 79; it reads LTLEDVTVEF…EDERHSRICP (72 aa). Tyr-41 is subject to 3'-nitrotyrosine. Ser-139 and Ser-164 each carry ADP-ribosylserine. C2H2-type zinc fingers lie at residues 205-227, 233-255, 261-283, 289-311, 317-339, 345-367, 373-395, 401-423, 429-451, 457-479, 485-507, 513-535, 541-563, 567-591, 597-619, and 625-647; these read HVCS…ERVH, YGCT…QRIH, FICS…QRTH, YICN…QRNH, YICS…QRTH, YICS…QRNH, YICN…QRTH, YLCS…QRTH, YTCS…QRTH, YRCS…QRTH, FMCS…QQIH, KSCI…KQVH, YGCN…QRTH, and FVCS…QRTH. ADP-ribosylserine is present on Ser-246. Ser-330 carries the post-translational modification ADP-ribosylserine. Ser-414 is subject to ADP-ribosylserine.

This sequence belongs to the krueppel C2H2-type zinc-finger protein family. In terms of assembly, interacts with PARP1 and several chromatin remodeling proteins; the interaction with PARP1 reshapes ZNF432 interacting proteins. Interacts with TRIM28; the interaction is independent of PARP1.

The protein localises to the nucleus. In terms of biological role, homologous recombination repressor that functions as a poly(ADP-ribose) (PAR) reader regulating DNA damage response and PARP inhibition. Once recruited to DNA lesions via DNA-, in a PAR-dependent mechanism, stimulates PARP1 activity. Binds preferentially ssDNA and inhibits EXO1-mediated resection, probably through a PAR-independent DNA-binding mechanism. The chain is Zinc finger protein 432 from Homo sapiens (Human).